Here is an 890-residue protein sequence, read N- to C-terminus: Wolframin (890 aa).

Met-1 bears the N-acetylmethionine mark. The segment at 1-86 (MDSNTAPLGP…TGPTKGDMEI (86 aa)) is disordered. The segment at 1–321 (MDSNTAPLGP…MHWLSTIIPT (321 aa)) is interaction with ATP6V1A. A compositionally biased stretch (pro residues) spans 10-20 (PSCPQPPPAPQ). Position 30 is a phosphothreonine; by FAM20C (Thr-30). A Phosphoserine; by FAM20C modification is found at Ser-32. The residue at position 157 (Ser-157) is a Phosphoserine. 10 helical membrane passes run 314-334 (WLSTIIPTHHINALIFFFIVS), 340-360 (FFAFFIPLVIFYLSFISMVIC), 402-422 (LEPYAHFLLSVFFVIFSFPIA), 427-447 (IPCSELAVITGFFTVTSYLSL), 465-485 (AGLLSLLPSMPLNWPYLKVLG), 496-516 (LVVLNVSVPCLLYVYLLYLFF), 529-549 (CYLVPYLVCFMWCELSVVILL), 563-583 (YFLFLFALPILVAGLALVGVL), 589-609 (FTSLELTKIAVTVAVCSVPLL), and 632-652 (MVKLILVWLTAIVLFCWFYVY). Topologically, residues 653–869 (RSEGMKVYNS…HVKIEHDWRS (217 aa)) are lumenal. N-linked (GlcNAc...) asparagine glycosylation is found at Asn-661 and Asn-746. Residues 870–890 (TVHGAVKFAFDFFFFPFLSAA) form a helical membrane-spanning segment.

In terms of assembly, interacts with ATP6V1A. In terms of tissue distribution, highly expressed in heart followed by brain, placenta, lung and pancreas. Weakly expressed in liver, kidney and skeletal muscle. Also expressed in islet and beta-cell insulinoma cell line.

It localises to the endoplasmic reticulum membrane. The protein resides in the cytoplasmic vesicle. The protein localises to the secretory vesicle. Functionally, participates in the regulation of cellular Ca(2+) homeostasis, at least partly, by modulating the filling state of the endoplasmic reticulum Ca(2+) store. Negatively regulates the ER stress response and positively regulates the stability of V-ATPase subunits ATP6V1A and ATP1B1 by preventing their degradation through an unknown proteasome-independent mechanism. This chain is Wolframin (WFS1), found in Homo sapiens (Human).